The chain runs to 467 residues: Methionine aminopeptidase 2-1 (467 aa).

The segment covering 1–10 (MGSKSPDGHR) has biased composition (basic and acidic residues). The segment at 1–105 (MGSKSPDGHR…TPPRVSLPSI (105 aa)) is disordered. A compositionally biased stretch (acidic residues) spans 43–55 (DGDDEDEDGDDDG). Residues 75–90 (KKRKRKSNKKKKKKTS) show a composition bias toward basic residues. H219 lines the substrate pocket. Positions 240, 251, and 320 each coordinate a divalent metal cation. H328 contacts substrate. A divalent metal cation contacts are provided by E353 and E448.

The protein belongs to the peptidase M24A family. Methionine aminopeptidase eukaryotic type 2 subfamily. Co(2+) is required as a cofactor. Zn(2+) serves as cofactor. Requires Mn(2+) as cofactor. It depends on Fe(2+) as a cofactor.

Its subcellular location is the cytoplasm. It carries out the reaction Release of N-terminal amino acids, preferentially methionine, from peptides and arylamides.. Cotranslationally removes the N-terminal methionine from nascent proteins. The N-terminal methionine is often cleaved when the second residue in the primary sequence is small and uncharged (Met-Ala-, Cys, Gly, Pro, Ser, Thr, or Val). In Arthroderma gypseum (strain ATCC MYA-4604 / CBS 118893) (Microsporum gypseum), this protein is Methionine aminopeptidase 2-1.